We begin with the raw amino-acid sequence, 574 residues long: Penicillin-binding protein activator LpoA (574 aa).

Positions 1 to 25 are cleaved as a signal peptide; the sequence is MTILLQRAKFKKRLMPILFPLMLAG. Residue C26 is the site of N-palmitoyl cysteine attachment. The S-diacylglycerol cysteine moiety is linked to residue C26.

Belongs to the LpoA family. In terms of assembly, interacts with PBP1a.

The protein localises to the cell outer membrane. In terms of biological role, regulator of peptidoglycan synthesis that is essential for the function of penicillin-binding protein 1A (PBP1a). The protein is Penicillin-binding protein activator LpoA of Mannheimia succiniciproducens (strain KCTC 0769BP / MBEL55E).